The primary structure comprises 179 residues: ATP synthase subunit delta (179 aa).

This sequence belongs to the ATPase delta chain family. As to quaternary structure, F-type ATPases have 2 components, F(1) - the catalytic core - and F(0) - the membrane proton channel. F(1) has five subunits: alpha(3), beta(3), gamma(1), delta(1), epsilon(1). F(0) has three main subunits: a(1), b(2) and c(10-14). The alpha and beta chains form an alternating ring which encloses part of the gamma chain. F(1) is attached to F(0) by a central stalk formed by the gamma and epsilon chains, while a peripheral stalk is formed by the delta and b chains.

Its subcellular location is the cell inner membrane. Functionally, f(1)F(0) ATP synthase produces ATP from ADP in the presence of a proton or sodium gradient. F-type ATPases consist of two structural domains, F(1) containing the extramembraneous catalytic core and F(0) containing the membrane proton channel, linked together by a central stalk and a peripheral stalk. During catalysis, ATP synthesis in the catalytic domain of F(1) is coupled via a rotary mechanism of the central stalk subunits to proton translocation. Its function is as follows. This protein is part of the stalk that links CF(0) to CF(1). It either transmits conformational changes from CF(0) to CF(1) or is implicated in proton conduction. This Anaeromyxobacter dehalogenans (strain 2CP-C) protein is ATP synthase subunit delta.